The chain runs to 190 residues: Segregation and condensation protein B (190 aa).

The protein belongs to the ScpB family. Homodimer. Homodimerization may be required to stabilize the binding of ScpA to the Smc head domains. Component of a cohesin-like complex composed of ScpA, ScpB and the Smc homodimer, in which ScpA and ScpB bind to the head domain of Smc. The presence of the three proteins is required for the association of the complex with DNA.

It is found in the cytoplasm. Participates in chromosomal partition during cell division. May act via the formation of a condensin-like complex containing Smc and ScpA that pull DNA away from mid-cell into both cell halves. This is Segregation and condensation protein B from Bacillus cereus (strain B4264).